The chain runs to 70 residues: Alpha-conotoxin EIIB (70 aa).

The signal sequence occupies residues 1 to 21 (MGMRMMFIVFLLVVLATTVVS). Positions 22 to 51 (FTLDHVLGLASEGRNAKAIDNALDQRDPKR) are excised as a propeptide. Gln-52 carries the pyrrolidone carboxylic acid modification. Position 54 is a hydroxyproline (Pro-54). 2 cysteine pairs are disulfide-bonded: Cys-56–Cys-62 and Cys-57–Cys-67. Cys-67 is modified (cysteine amide).

In terms of tissue distribution, expressed by the venom duct.

It localises to the secreted. Alpha-conotoxins bind to the nicotinic acetylcholine receptors (nAChR) and inhibit them. This peptide potently blocks muscular nicotinic acetylcholine receptor (CHRNA1-CHRNB1-CHRNG-CHRND), and has no effect on neuronal receptors. It is able to totally displace [125I]-Bgtx from the Torpedo receptor with an inhibition constant (Ki) of 2.2 and 0.7 nM. This chain is Alpha-conotoxin EIIB, found in Conus ermineus (Agate cone).